A 108-amino-acid polypeptide reads, in one-letter code: Movement protein TGB2 (108 aa).

The Cytoplasmic segment spans residues 1-14 (MPLTPPPDHSITYR). Residues 15–31 (ILAVGLCSCCAIYAATR) form a helical membrane-spanning segment. The Lumenal portion of the chain corresponds to 32–67 (STLPHTGDNLHSLPYGGKYSDGTKSICYSGPGPTPD). A helical membrane pass occupies residues 68–85 (IPTHLPALLVLVLVVAIY). Residues 86–108 (ASSRLDFSVNYRCSCRVHNRSGQ) are Cytoplasmic-facing.

It belongs to the Tymovirales TGBp2 protein family.

Its subcellular location is the host endoplasmic reticulum membrane. Its function is as follows. Plays a role in viral cell-to-cell propagation, by facilitating genome transport to neighboring plant cells through plasmosdesmata,. The protein is Movement protein TGB2 of Strawberry mild yellow edge-associated virus (SMYEaV).